A 306-amino-acid polypeptide reads, in one-letter code: Olfactory receptor 8G17 (306 aa).

Over M1–F28 the chain is Extracellular. An N-linked (GlcNAc...) asparagine glycan is attached at N5. A helical membrane pass occupies residues L29–I49. The Cytoplasmic segment spans residues L50–H56. Residues T57–I77 form a helical membrane-spanning segment. Topologically, residues T78–C97 are extracellular. A helical transmembrane segment spans residues I98–M118. Residues A119–S143 are Cytoplasmic-facing. A helical transmembrane segment spans residues L144–F164. Topologically, residues R165–D196 are extracellular. A helical membrane pass occupies residues L197–S217. Topologically, residues Y218–K236 are cytoplasmic. The helical transmembrane segment at A237 to F257 threads the bilayer. Topologically, residues T258–G271 are extracellular. Residues K272–L292 form a helical membrane-spanning segment. At R293–E306 the chain is on the cytoplasmic side.

This sequence belongs to the G-protein coupled receptor 1 family.

The protein localises to the cell membrane. Functionally, odorant receptor. In Mus musculus (Mouse), this protein is Olfactory receptor 8G17.